A 568-amino-acid polypeptide reads, in one-letter code: Urease subunit alpha (568 aa).

One can recognise a Urease domain in the interval 130-568; sequence GGIDTHIHFI…LPMAQRYFLF (439 aa). Residues H135, H137, and K218 each coordinate Ni(2+). N6-carboxylysine is present on K218. Substrate is bound at residue H220. Ni(2+) contacts are provided by H247 and H273. The active-site Proton donor is H321. A Ni(2+)-binding site is contributed by D361.

It belongs to the metallo-dependent hydrolases superfamily. Urease alpha subunit family. In terms of assembly, heterotrimer of UreA (gamma), UreB (beta) and UreC (alpha) subunits. Three heterotrimers associate to form the active enzyme. Requires Ni cation as cofactor. Carboxylation allows a single lysine to coordinate two nickel ions.

It is found in the cytoplasm. The enzyme catalyses urea + 2 H2O + H(+) = hydrogencarbonate + 2 NH4(+). It functions in the pathway nitrogen metabolism; urea degradation; CO(2) and NH(3) from urea (urease route): step 1/1. The polypeptide is Urease subunit alpha (Burkholderia cenocepacia (strain ATCC BAA-245 / DSM 16553 / LMG 16656 / NCTC 13227 / J2315 / CF5610) (Burkholderia cepacia (strain J2315))).